A 745-amino-acid polypeptide reads, in one-letter code: 5-methyltetrahydropteroyltriglutamate--homocysteine methyltransferase (745 aa).

Residues 19-22 (RELK) and Lys-119 each bind 5-methyltetrahydropteroyltri-L-glutamate. Residues 418–420 (IGS) and Glu-471 each bind L-homocysteine. L-methionine contacts are provided by residues 418–420 (IGS) and Glu-471. Residues 502–503 (RC) and Trp-548 contribute to the 5-methyltetrahydropteroyltri-L-glutamate site. Asp-586 contributes to the L-homocysteine binding site. Residue Asp-586 participates in L-methionine binding. Glu-592 provides a ligand contact to 5-methyltetrahydropteroyltri-L-glutamate. Zn(2+) is bound by residues His-628, Cys-630, and Glu-652. His-681 serves as the catalytic Proton donor. Position 713 (Cys-713) interacts with Zn(2+).

This sequence belongs to the vitamin-B12 independent methionine synthase family. Zn(2+) serves as cofactor.

The catalysed reaction is 5-methyltetrahydropteroyltri-L-glutamate + L-homocysteine = tetrahydropteroyltri-L-glutamate + L-methionine. It functions in the pathway amino-acid biosynthesis; L-methionine biosynthesis via de novo pathway; L-methionine from L-homocysteine (MetE route): step 1/1. Catalyzes the transfer of a methyl group from 5-methyltetrahydrofolate to homocysteine resulting in methionine formation. The protein is 5-methyltetrahydropteroyltriglutamate--homocysteine methyltransferase of Corynebacterium glutamicum (strain R).